Here is a 440-residue protein sequence, read N- to C-terminus: Chromosome partition protein MukF (440 aa).

The tract at residues 208–236 (LSETSGTLRELQDTLDAAGDKLQANLLRI) is leucine-zipper.

It belongs to the MukF family. Interacts, and probably forms a ternary complex, with MukE and MukB via its C-terminal region. The complex formation is stimulated by calcium or magnesium. It is required for an interaction between MukE and MukB.

Its subcellular location is the cytoplasm. The protein localises to the nucleoid. Functionally, involved in chromosome condensation, segregation and cell cycle progression. May participate in facilitating chromosome segregation by condensation DNA from both sides of a centrally located replisome during cell division. Not required for mini-F plasmid partitioning. Probably acts via its interaction with MukB and MukE. Overexpression results in anucleate cells. It has a calcium binding activity. The polypeptide is Chromosome partition protein MukF (Klebsiella pneumoniae subsp. pneumoniae (strain ATCC 700721 / MGH 78578)).